A 444-amino-acid polypeptide reads, in one-letter code: ATPase PAAT (444 aa).

Phosphoserine is present on residues Ser-177, Ser-182, Ser-254, and Ser-302. The interval 424–444 (PSPGMPLRHYDSRERLSNGER) is disordered. The segment covering 431 to 444 (RHYDSRERLSNGER) has biased composition (basic and acidic residues).

In terms of assembly, homodimer. Interacts with ABCB7, ABCB8/MITOSUR and ABCB10.

The protein localises to the cytoplasm. The protein resides in the mitochondrion. The enzyme catalyses ATP + H2O = ADP + phosphate + H(+). In terms of biological role, ATPase that regulates mitochondrial ABC transporters ABCB7, ABCB8/MITOSUR and ABCB10. Regulates mitochondrial ferric concentration and heme biosynthesis and plays a role in the maintenance of mitochondrial homeostasis and cell survival. This chain is ATPase PAAT, found in Rattus norvegicus (Rat).